Here is a 369-residue protein sequence, read N- to C-terminus: UDP-N-acetylglucosamine--N-acetylmuramyl-(pentapeptide) pyrophosphoryl-undecaprenol N-acetylglucosamine transferase (369 aa).

UDP-N-acetyl-alpha-D-glucosamine-binding positions include 10-12 (TGG), Asn124, Ser195, Ile252, and Gln297.

The protein belongs to the glycosyltransferase 28 family. MurG subfamily.

It is found in the cell membrane. The catalysed reaction is Mur2Ac(oyl-L-Ala-gamma-D-Glu-L-Lys-D-Ala-D-Ala)-di-trans,octa-cis-undecaprenyl diphosphate + UDP-N-acetyl-alpha-D-glucosamine = beta-D-GlcNAc-(1-&gt;4)-Mur2Ac(oyl-L-Ala-gamma-D-Glu-L-Lys-D-Ala-D-Ala)-di-trans,octa-cis-undecaprenyl diphosphate + UDP + H(+). It functions in the pathway cell wall biogenesis; peptidoglycan biosynthesis. Functionally, cell wall formation. Catalyzes the transfer of a GlcNAc subunit on undecaprenyl-pyrophosphoryl-MurNAc-pentapeptide (lipid intermediate I) to form undecaprenyl-pyrophosphoryl-MurNAc-(pentapeptide)GlcNAc (lipid intermediate II). The sequence is that of UDP-N-acetylglucosamine--N-acetylmuramyl-(pentapeptide) pyrophosphoryl-undecaprenol N-acetylglucosamine transferase from Leuconostoc citreum (strain KM20).